The following is a 285-amino-acid chain: Probable endonuclease 4 (285 aa).

Zn(2+)-binding residues include histidine 67, histidine 107, glutamate 144, aspartate 177, histidine 180, histidine 214, aspartate 227, histidine 229, and glutamate 259.

This sequence belongs to the AP endonuclease 2 family. Requires Zn(2+) as cofactor.

It carries out the reaction Endonucleolytic cleavage to 5'-phosphooligonucleotide end-products.. Endonuclease IV plays a role in DNA repair. It cleaves phosphodiester bonds at apurinic or apyrimidinic (AP) sites, generating a 3'-hydroxyl group and a 5'-terminal sugar phosphate. This chain is Probable endonuclease 4, found in Persephonella marina (strain DSM 14350 / EX-H1).